The chain runs to 464 residues: UDP-N-acetylmuramoylalanine--D-glutamate ligase (464 aa).

127–133 lines the ATP pocket; that stretch reads GSNGKST.

Belongs to the MurCDEF family.

Its subcellular location is the cytoplasm. It carries out the reaction UDP-N-acetyl-alpha-D-muramoyl-L-alanine + D-glutamate + ATP = UDP-N-acetyl-alpha-D-muramoyl-L-alanyl-D-glutamate + ADP + phosphate + H(+). The protein operates within cell wall biogenesis; peptidoglycan biosynthesis. Cell wall formation. Catalyzes the addition of glutamate to the nucleotide precursor UDP-N-acetylmuramoyl-L-alanine (UMA). The chain is UDP-N-acetylmuramoylalanine--D-glutamate ligase from Roseobacter denitrificans (strain ATCC 33942 / OCh 114) (Erythrobacter sp. (strain OCh 114)).